We begin with the raw amino-acid sequence, 824 residues long: Ras guanine nucleotide exchange factor I (824 aa).

Disordered stretches follow at residues 1 to 51 (MSNP…KPTK) and 65 to 167 (GSNL…LILD). Residues 8–41 (SNSTNGSSNSLNGESVSPNRLGSSPGSPISKASS) are compositionally biased toward low complexity. A compositionally biased stretch (polar residues) spans 83–95 (NSSVGLLNNSTGS). Residues 104–116 (SSPKSSYILSSSI) show a composition bias toward low complexity. The segment covering 117–128 (GSGGSGGGGGSS) has biased composition (gly residues). Residues 136-167 (SASNNSSGPRSRSGSLGKNNSSQQNNNNLILD) are compositionally biased toward low complexity. The LisH domain occupies 223–255 (GRDNILQLILQHLQFEGLMDSRKILEEEAKIQY). Disordered stretches follow at residues 330–354 (YVDE…TTAT) and 398–425 (NTQQ…STGT). Over residues 331-341 (VDEKDNDKPSK) the composition is skewed to basic and acidic residues. The segment covering 343–354 (SPTTATTTTTAT) has biased composition (low complexity). The segment covering 413-425 (LKSTQSITGSTGT) has biased composition (polar residues). An N-terminal Ras-GEF domain is found at 426 to 551 (LGPQVKAASL…VISDALNSGL (126 aa)). In terms of domain architecture, Ras-GEF spans 585–816 (DEEEISRQLT…YTRSMSFEPR (232 aa)).

Promotes the exchange of Ras-bound GDP by GTP. This chain is Ras guanine nucleotide exchange factor I (gefI), found in Dictyostelium discoideum (Social amoeba).